Here is a 685-residue protein sequence, read N- to C-terminus: Heat shock protein homolog SSE1 (685 aa).

Positions 651-685 (QALRSNQEASKMADLSAKLAAQRKAEAEAKENAKE) are disordered. Over residues 673 to 685 (RKAEAEAKENAKE) the composition is skewed to basic and acidic residues.

It belongs to the heat shock protein 70 family.

It localises to the cytoplasm. In Naumovozyma castellii (Yeast), this protein is Heat shock protein homolog SSE1 (SSE1).